The chain runs to 499 residues: Glycerol kinase (499 aa).

ADP is bound at residue Thr13. ATP-binding residues include Thr13, Thr14, and Ser15. Sn-glycerol 3-phosphate is bound at residue Thr13. Arg17 is an ADP binding site. Residues Arg83, Glu84, Tyr135, and Asp244 each contribute to the sn-glycerol 3-phosphate site. Glycerol is bound by residues Arg83, Glu84, Tyr135, Asp244, and Gln245. Residues Thr266 and Gly310 each coordinate ADP. ATP contacts are provided by Thr266, Gly310, Gln314, and Gly411. Residues Gly411 and Asn415 each contribute to the ADP site.

The protein belongs to the FGGY kinase family.

The enzyme catalyses glycerol + ATP = sn-glycerol 3-phosphate + ADP + H(+). Its pathway is polyol metabolism; glycerol degradation via glycerol kinase pathway; sn-glycerol 3-phosphate from glycerol: step 1/1. Its activity is regulated as follows. Inhibited by fructose 1,6-bisphosphate (FBP). Its function is as follows. Key enzyme in the regulation of glycerol uptake and metabolism. Catalyzes the phosphorylation of glycerol to yield sn-glycerol 3-phosphate. In Pseudothermotoga lettingae (strain ATCC BAA-301 / DSM 14385 / NBRC 107922 / TMO) (Thermotoga lettingae), this protein is Glycerol kinase.